The following is a 251-amino-acid chain: Flap endonuclease Xni (251 aa).

Residue D104 participates in Mg(2+) binding. In terms of domain architecture, 5'-3' exonuclease spans 160–250 (VQPQQLPDYW…DGNLQQLRLK (91 aa)). L171, A172, P180, V182, and I185 together coordinate K(+). An interaction with DNA region spans residues 184 to 189 (GIGPKS).

This sequence belongs to the Xni family. Mg(2+) serves as cofactor. It depends on K(+) as a cofactor.

Has flap endonuclease activity. During DNA replication, flap endonucleases cleave the 5'-overhanging flap structure that is generated by displacement synthesis when DNA polymerase encounters the 5'-end of a downstream Okazaki fragment. The chain is Flap endonuclease Xni from Escherichia fergusonii (strain ATCC 35469 / DSM 13698 / CCUG 18766 / IAM 14443 / JCM 21226 / LMG 7866 / NBRC 102419 / NCTC 12128 / CDC 0568-73).